The primary structure comprises 260 residues: MQAFKEYWQKQKKDVTDKKQLLEALKLSFAKEQNKTFAFLIKNFQDGISNYYPNDQEDQSEAAKTAFGTQGIAFPQSGLKGIFMSEWLRKQLGEKAKINLDIKSLKVTDSKISPTIKWNKDIGIKRNQDKPYNFRFEIDIEYQGNYKLSWLEAIIAKFSGIPGEWKGKLNLKFIVDGDLSWEIVQKPDYPGSLFQFDDQKQQLLFKLHVWEKITVQEPEFMELIKSQNLHNLELRTESTKPPVVDLASYLHYQLLKLNQQ.

It belongs to the MG032/MG096/MG288 family.

This is an uncharacterized protein from Mycoplasma pneumoniae (strain ATCC 29342 / M129 / Subtype 1) (Mycoplasmoides pneumoniae).